The sequence spans 535 residues: 5,6-dihydroxyindole-2-carboxylic acid oxidase (535 aa).

The signal sequence occupies residues 1 to 23 (MQLPMLLLVSLPLLLNMFKPAEA). Residues 24–478 (QFPRQCATIE…GPLRVTEMIT (455 aa)) lie on the Lumenal, melanosome side of the membrane. Disulfide bonds link Cys29/Cys40, Cys41/Cys64, Cys55/Cys98, Cys100/Cys109, and Cys112/Cys121. 2 N-linked (GlcNAc...) asparagine glycosylation sites follow: Asn95 and Asn103. Asn180 carries N-linked (GlcNAc...) asparagine glycosylation. Positions 191, 214, and 223 each coordinate Zn(2+). 2 disulfide bridges follow: Cys257–Cys260 and Cys289–Cys302. N-linked (GlcNAc...) asparagine glycans are attached at residues Asn303 and Asn349. The Zn(2+) site is built by His376 and His380. Asn384 carries an N-linked (GlcNAc...) asparagine glycan. Zn(2+) is bound at residue His403. Residues 479-499 (IAIVTALVLVAIIFAAAACIV) traverse the membrane as a helical segment. The Cytoplasmic portion of the chain corresponds to 500 to 535 (RAKKNRDELHQPLLTDQYQHYSDDYDGIATPSQSVV).

Belongs to the tyrosinase family. In terms of assembly, tyrosinase, TYRP1 and TYRP2 may form a multienzyme complex. It depends on Cu(2+) as a cofactor. Zn(2+) is required as a cofactor.

Its subcellular location is the melanosome membrane. The catalysed reaction is 2 5,6-dihydroxyindole-2-carboxylate + O2 = 2 indole-5,6-quinone-2-carboxylate + 2 H2O. It functions in the pathway pigment biosynthesis; melanin biosynthesis. Plays a role in melanin biosynthesis. Catalyzes the oxidation of 5,6-dihydroxyindole-2-carboxylic acid (DHICA) into indole-5,6-quinone-2-carboxylic acid. May regulate or influence the type of melanin synthesized. Also to a lower extent, capable of hydroxylating tyrosine and producing melanin. The protein is 5,6-dihydroxyindole-2-carboxylic acid oxidase (TYRP1) of Gallus gallus (Chicken).